The following is a 460-amino-acid chain: Probable serine/threonine-protein kinase kinase DDB_G0280557 (460 aa).

Residues 102–416 enclose the Protein kinase domain; the sequence is INLKSITDCG…IDQLLAHKYF (315 aa). Residues Lys131 and 154 to 162 each bind ATP; that span reads QRHFQQHPL. Asp250 acts as the Proton acceptor in catalysis.

Belongs to the protein kinase superfamily. CMGC Ser/Thr protein kinase family. MAP kinase subfamily.

The catalysed reaction is L-seryl-[protein] + ATP = O-phospho-L-seryl-[protein] + ADP + H(+). It catalyses the reaction L-threonyl-[protein] + ATP = O-phospho-L-threonyl-[protein] + ADP + H(+). The chain is Probable serine/threonine-protein kinase kinase DDB_G0280557 from Dictyostelium discoideum (Social amoeba).